Here is a 576-residue protein sequence, read N- to C-terminus: Sulfite reductase [NADPH] hemoprotein beta-component (576 aa).

[4Fe-4S] cluster contacts are provided by Cys434, Cys440, Cys479, and Cys483. Cys483 contributes to the siroheme binding site.

This sequence belongs to the nitrite and sulfite reductase 4Fe-4S domain family. As to quaternary structure, alpha(8)-beta(8). The alpha component is a flavoprotein, the beta component is a hemoprotein. Siroheme serves as cofactor. The cofactor is [4Fe-4S] cluster.

It catalyses the reaction hydrogen sulfide + 3 NADP(+) + 3 H2O = sulfite + 3 NADPH + 4 H(+). It participates in sulfur metabolism; hydrogen sulfide biosynthesis; hydrogen sulfide from sulfite (NADPH route): step 1/1. Its function is as follows. Component of the sulfite reductase complex that catalyzes the 6-electron reduction of sulfite to sulfide. This is one of several activities required for the biosynthesis of L-cysteine from sulfate. This Oceanobacillus iheyensis (strain DSM 14371 / CIP 107618 / JCM 11309 / KCTC 3954 / HTE831) protein is Sulfite reductase [NADPH] hemoprotein beta-component.